A 391-amino-acid polypeptide reads, in one-letter code: Phosphoglycerate kinase (391 aa).

Substrate contacts are provided by residues 21–23 (DLN), Arg-36, 59–62 (HLGR), Arg-113, and Arg-146. Residues Lys-197, Glu-319, and 345–348 (GGDT) contribute to the ATP site.

The protein belongs to the phosphoglycerate kinase family. Monomer.

Its subcellular location is the cytoplasm. The enzyme catalyses (2R)-3-phosphoglycerate + ATP = (2R)-3-phospho-glyceroyl phosphate + ADP. It participates in carbohydrate degradation; glycolysis; pyruvate from D-glyceraldehyde 3-phosphate: step 2/5. This is Phosphoglycerate kinase from Shewanella baltica (strain OS185).